A 60-amino-acid chain; its full sequence is UPF0337 protein SACOL1680 (60 aa).

This sequence belongs to the UPF0337 (CsbD) family.

In Staphylococcus aureus (strain COL), this protein is UPF0337 protein SACOL1680.